The following is a 548-amino-acid chain: Sulochrin halogenase gedL (548 aa).

Residues Gly14, Ala17, and Glu47 each contribute to the FAD site. Positions 333 and 334 each coordinate chloride. Val335 provides a ligand contact to FAD.

Belongs to the flavin-dependent halogenase family.

It catalyses the reaction sulochrin + 2 FADH2 + 2 chloride + 2 O2 = dihydrogeodin + 2 FAD + 4 H2O + H(+). It functions in the pathway secondary metabolite biosynthesis. Its function is as follows. Sulochrin halogenase; part of the gene cluster that mediates the biosynthesis of geodin, an intermediate in the biosynthesis of other natural products. The pathway begins with the synthesis of atrochrysone thioester by the polyketide synthase (PKS) gedC. The atrochrysone carboxyl ACP thioesterase gedB then breaks the thioester bond and releases the atrochrysone carboxylic acid from gedC. The atrochrysone carboxylic acid is then converted to atrochrysone which is further transformed into emodinanthrone. The next step is performed by the emodinanthrone oxygenase gedH that catalyzes the oxidation of emodinanthrone to emodin. Emodin O-methyltransferase encoded probably by gedA then catalyzes methylation of the 8-hydroxy group of emodin to form questin. Ring cleavage of questin by questin oxidase gedK leads to desmethylsulochrin via several intermediates including questin epoxide. Another methylation step probably catalyzed by methyltransferase gedG leads to the formation of sulochrin which is further converted to dihydrogeodin by the sulochrin halogenase gedL. Finally, the dihydrogeodin oxidase gedJ catalyzes the stereospecific phenol oxidative coupling reaction converting dihydrogeodin to geodin. This chain is Sulochrin halogenase gedL, found in Aspergillus terreus (strain NIH 2624 / FGSC A1156).